Consider the following 69-residue polypeptide: Large ribosomal subunit protein bL28 (69 aa).

Belongs to the bacterial ribosomal protein bL28 family.

This chain is Large ribosomal subunit protein bL28, found in Nitratidesulfovibrio vulgaris (strain DSM 19637 / Miyazaki F) (Desulfovibrio vulgaris).